The chain runs to 89 residues: Small ribosomal subunit protein uS15 (89 aa).

This sequence belongs to the universal ribosomal protein uS15 family. Part of the 30S ribosomal subunit. Forms a bridge to the 50S subunit in the 70S ribosome, contacting the 23S rRNA.

In terms of biological role, one of the primary rRNA binding proteins, it binds directly to 16S rRNA where it helps nucleate assembly of the platform of the 30S subunit by binding and bridging several RNA helices of the 16S rRNA. Its function is as follows. Forms an intersubunit bridge (bridge B4) with the 23S rRNA of the 50S subunit in the ribosome. In Roseiflexus castenholzii (strain DSM 13941 / HLO8), this protein is Small ribosomal subunit protein uS15.